The following is a 1095-amino-acid chain: DNA polymerase delta catalytic subunit (1095 aa).

Basic residues predominate over residues 1–11 (MNRSGISKKRP). The interval 1–37 (MNRSGISKKRPPPSNTPPPAGKHRATGDSTPSPAIGT) is disordered. Zn(2+) is bound by residues Cys-1007, Cys-1010, Cys-1020, and Cys-1023. The CysA-type zinc-finger motif lies at 1007–1023 (CVGCKVPISNGTLCASC). Residues Cys-1052, Cys-1055, Cys-1065, and Cys-1070 each coordinate [4Fe-4S] cluster. Residues 1052-1070 (CQECQGSLHQDVLCTSRDC) carry the CysB motif motif.

Belongs to the DNA polymerase type-B family. As to quaternary structure, heterodimer with subunits of 125 kDa and 50 kDa. The 125 kDa subunit contains the polymerase active site and most likely the active site for the 3'-5' exonuclease activity. It depends on [4Fe-4S] cluster as a cofactor.

It is found in the nucleus. The catalysed reaction is DNA(n) + a 2'-deoxyribonucleoside 5'-triphosphate = DNA(n+1) + diphosphate. Its function is as follows. This polymerase possesses two enzymatic activities: DNA synthesis (polymerase) and an exonucleolytic activity that degrades single-stranded DNA in the 3'- to 5'-direction. In Arabidopsis thaliana (Mouse-ear cress), this protein is DNA polymerase delta catalytic subunit (POLD1).